The primary structure comprises 193 residues: Pyridoxal 5'-phosphate synthase subunit PdxT (193 aa).

An L-glutamine-binding site is contributed by 48-50 (GES). Cys80 functions as the Nucleophile in the catalytic mechanism. Residues Arg107 and 136 to 137 (IR) each bind L-glutamine. Residues His172 and Glu174 each act as charge relay system in the active site.

The protein belongs to the glutaminase PdxT/SNO family. In terms of assembly, in the presence of PdxS, forms a dodecamer of heterodimers. Only shows activity in the heterodimer.

The catalysed reaction is aldehydo-D-ribose 5-phosphate + D-glyceraldehyde 3-phosphate + L-glutamine = pyridoxal 5'-phosphate + L-glutamate + phosphate + 3 H2O + H(+). It carries out the reaction L-glutamine + H2O = L-glutamate + NH4(+). The protein operates within cofactor biosynthesis; pyridoxal 5'-phosphate biosynthesis. Functionally, catalyzes the hydrolysis of glutamine to glutamate and ammonia as part of the biosynthesis of pyridoxal 5'-phosphate. The resulting ammonia molecule is channeled to the active site of PdxS. This is Pyridoxal 5'-phosphate synthase subunit PdxT from Clostridium botulinum (strain Loch Maree / Type A3).